Consider the following 1196-residue polypeptide: DNA polymerase beta (1196 aa).

Belongs to the DNA polymerase type-B family.

The catalysed reaction is DNA(n) + a 2'-deoxyribonucleoside 5'-triphosphate = DNA(n+1) + diphosphate. Functionally, DNA-directed DNA polymerase involved in viral DNA replication. The sequence is that of DNA polymerase beta from African swine fever virus (isolate Pig/Kenya/KEN-50/1950) (ASFV).